Consider the following 527-residue polypeptide: Amino acid transporter heavy chain SLC3A2 (527 aa).

Residues 1-31 (MSQDTEVDMKDVELNELEPEKQPMNAADGAA) form a disordered region. Residues 1 to 75 (MSQDTEVDMK…AGSPGWVRTR (75 aa)) lie on the Cytoplasmic side of the membrane. Serine 2 is modified (phosphoserine). Position 5 is a phosphothreonine (threonine 5). Basic and acidic residues predominate over residues 7–21 (VDMKDVELNELEPEK). Lysine 42 participates in a covalent cross-link: Glycyl lysine isopeptide (Lys-Gly) (interchain with G-Cter in ubiquitin). Serine 58 carries the phosphoserine modification. Residue lysine 59 forms a Glycyl lysine isopeptide (Lys-Gly) (interchain with G-Cter in SUMO2) linkage. The chain crosses the membrane as a helical; Signal-anchor for type II membrane protein span at residues 76 to 98 (WALLLLFWLGWLGMLAGAVVIIV). At 99-527 (RAPRCRELPV…GLLLQFPFVA (429 aa)) the chain is on the extracellular side. Residues asparagine 166, asparagine 249, asparagine 259, and asparagine 263 are each glycosylated (N-linked (GlcNAc...) asparagine). Phosphoserine is present on serine 300. N-linked (GlcNAc...) asparagine glycans are attached at residues asparagine 318, asparagine 386, and asparagine 400. Position 421 is a phosphoserine (serine 421). Asparagine 510 carries N-linked (GlcNAc...) asparagine glycosylation.

The protein belongs to the SLC3A transporter family. As to quaternary structure, disulfide-linked heterodimer with a non-glycosylated light chain (SLC7A5, SLC7A6, SLC7A7, SLC7A8, SLC7A10 or SLC7A11). Interacts with TLCD3A/CT120 and ICAM1. Constitutively and specifically associates with beta-1 integrins (alpha-2/beta-1, alpha-3/beta-1, alpha-5/beta-1 and alpha-6/beta-1), but minimally with alpha-4/beta-1. Interacts with LAPTM4B; recruits SLC3A2 and SLC7A5 to lysosomes to promote leucine uptake into these organelles and is required for mTORC1 activation. Post-translationally, phosphorylation on Ser-300 and on Ser-421 by ecto-protein kinases favors heterotypic cell-cell interactions. N-glycosylated; N-glycosylation is crucial for trafficking and stability of SLC3A2 to the plasma membrane. In terms of tissue distribution, in brain expressed on capillary endothelia in cerebral cortex (at protein level). Highest expression in kidney, jejunum, ileum, colon, placenta, testis and spleen. Lower levels found in liver, lung and brain with weakest expression in heart. Expressed in retina, inner blood-retinal barrier of retina, retinal vascular endothelial cells. Also expressed in C6 glioma cells and in the retinal capillary endothelial cell line TR-iBRB2.

It is found in the apical cell membrane. The protein resides in the cell membrane. It localises to the cell junction. The protein localises to the lysosome membrane. Its subcellular location is the melanosome. It is found in the basolateral cell membrane. In terms of biological role, acts as a chaperone that facilitates biogenesis and trafficking of functional transporters heterodimers to the plasma membrane. Forms heterodimer with SLC7 family transporters (SLC7A5, SLC7A6, SLC7A7, SLC7A8, SLC7A10 and SLC7A11), a group of amino-acid antiporters. Heterodimers function as amino acids exchangers, the specificity of the substrate depending on the SLC7A subunit. Heterodimers formed by SLC3A2/SLC7A6 or SLC3A2/SLC7A7 mediate the uptake of dibasic amino acids. Heterodimer SLC3A2/SLC7A11 functions as an antiporter by mediating the exchange of extracellular anionic L-cystine and intracellular L-glutamate across the cellular plasma membrane. SLC3A2/SLC7A10 translocates small neutral L- and D-amino acids across the plasma membrane. SLC3A2/SLC75 or SLC3A2/SLC7A8 translocates neutral amino acids with broad specificity, thyroid hormones and L-DOPA. SLC3A2 is essential for plasma membrane localization, stability, and the transport activity of SLC7A5 and SLC7A8. When associated with LAPTM4B, the heterodimer SLC7A5 is recruited to lysosomes to promote leucine uptake into these organelles, and thereby mediates mTORC1 activation. Modulates integrin-related signaling and is essential for integrin-dependent cell spreading, migration and tumor progression. This chain is Amino acid transporter heavy chain SLC3A2, found in Rattus norvegicus (Rat).